A 357-amino-acid chain; its full sequence is NADH-quinone oxidoreductase subunit H (357 aa).

The next 8 membrane-spanning stretches (helical) occupy residues 18–38, 92–112, 127–147, 165–185, 206–226, 268–288, 294–314, and 329–349; these read VAWM…PIIL, VLFV…WAVV, LLYI…AGWA, VSYE…SGSL, FLSW…ISAV, ILLS…PIDI, IPGW…FVWF, and LGWK…AIWM.

This sequence belongs to the complex I subunit 1 family. As to quaternary structure, NDH-1 is composed of 14 different subunits. Subunits NuoA, H, J, K, L, M, N constitute the membrane sector of the complex.

It is found in the cell inner membrane. It carries out the reaction a quinone + NADH + 5 H(+)(in) = a quinol + NAD(+) + 4 H(+)(out). In terms of biological role, NDH-1 shuttles electrons from NADH, via FMN and iron-sulfur (Fe-S) centers, to quinones in the respiratory chain. The immediate electron acceptor for the enzyme in this species is believed to be ubiquinone. Couples the redox reaction to proton translocation (for every two electrons transferred, four hydrogen ions are translocated across the cytoplasmic membrane), and thus conserves the redox energy in a proton gradient. This subunit may bind ubiquinone. This Bordetella bronchiseptica (strain ATCC BAA-588 / NCTC 13252 / RB50) (Alcaligenes bronchisepticus) protein is NADH-quinone oxidoreductase subunit H.